Reading from the N-terminus, the 347-residue chain is Ryncolin-2 (347 aa).

A signal peptide spans 1–19 (MKPWAAFHLIFLVASSLEG). Residues 49–115 (LQSQPGIPGI…DKGDKGDKGD (67 aa)) form a disordered region. Residues 57–114 (GIPGVPGINGSEGLKGDPGPQGLPGETGFDGIPGVAGPKGDKGDQGDKGDKGDKGDKG) form the Collagen-like domain. Basic and acidic residues predominate over residues 95–115 (KGDKGDQGDKGDKGDKGDKGD). In terms of domain architecture, Fibrinogen C-terminal spans 121-341 (DCPPTDVEVR…YADMKIRPQQ (221 aa)). Cystine bridges form between Cys132/Cys160 and Cys284/Cys297.

Belongs to the ficolin lectin family. Veficolin subfamily. Post-translationally, hydroxylated, possibly at Pro-74 and Pro-94. Expressed by the venom duct.

It localises to the secreted. Its function is as follows. Initiates complement activation and/or interferes in platelet aggregation and/or blood coagulation. The protein is Ryncolin-2 of Cerberus rynchops (Dog-faced water snake).